The following is an 862-amino-acid chain: Phosphofurin acidic cluster sorting protein 2 (862 aa).

Disordered stretches follow at residues 151-215 (HEDS…TTSM), 263-436 (LDVE…TRSQ), and 658-713 (SSAT…SQGV). The segment covering 263–272 (LDVENPSDSG) has biased composition (low complexity). Over residues 313-328 (SHREPPSPADVPEKTR) the composition is skewed to basic and acidic residues. Residues 332 to 344 (GKQQLSDSVSDTV) show a composition bias toward polar residues. Ser361, Ser387, Ser424, Ser662, and Ser665 each carry phosphoserine. Low complexity-rich tracts occupy residues 658-693 (SSAT…KEAS) and 700-710 (PSVSGGLSSPS).

Belongs to the PACS family. Interacts with BID and PKD2. Interacts with SIRT1. Interacts with HDAC1. Interacts with TRPV1. Interacts with WDR37.

The protein localises to the endoplasmic reticulum. The protein resides in the mitochondrion. Its function is as follows. Multifunctional sorting protein that controls the endoplasmic reticulum (ER)-mitochondria communication, including the apposition of mitochondria with the ER and ER homeostasis. In addition, in response to apoptotic inducer, translocates BIB to mitochondria, which initiates a sequence of events including the formation of mitochondrial truncated BID, the release of cytochrome c, the activation of caspase-3 thereby causing cell death. May also involved in ion channel trafficking, directing acidic cluster-containing ion channels to distinct subcellular compartments. The sequence is that of Phosphofurin acidic cluster sorting protein 2 (Pacs2) from Mus musculus (Mouse).